The following is a 326-amino-acid chain: Phenylalanine--tRNA ligase alpha subunit (326 aa).

Glu-251 is a binding site for Mg(2+).

It belongs to the class-II aminoacyl-tRNA synthetase family. Phe-tRNA synthetase alpha subunit type 1 subfamily. As to quaternary structure, tetramer of two alpha and two beta subunits. Requires Mg(2+) as cofactor.

Its subcellular location is the cytoplasm. The catalysed reaction is tRNA(Phe) + L-phenylalanine + ATP = L-phenylalanyl-tRNA(Phe) + AMP + diphosphate + H(+). This is Phenylalanine--tRNA ligase alpha subunit from Pseudoalteromonas atlantica (strain T6c / ATCC BAA-1087).